Here is a 623-residue protein sequence, read N- to C-terminus: Kelch repeat and BTB domain-containing protein 12 (623 aa).

The BTB domain occupies 31–98 (IDVVLTAEGE…MYNAALEINN (68 aa)). The 103-residue stretch at 133 to 235 (CLGIYYFAKQ…NPSFLRQALR (103 aa)) folds into the BACK domain. Kelch repeat units follow at residues 386–436 (DLYV…TVNN), 437–492 (KLYV…VVNS), 494–547 (IYVL…STNA), and 553–603 (KLYV…LVAR).

The sequence is that of Kelch repeat and BTB domain-containing protein 12 (KBTBD12) from Homo sapiens (Human).